Here is a 427-residue protein sequence, read N- to C-terminus: Transcription termination factor Rho (427 aa).

The Rho RNA-BD domain occupies 51–125; it reads LLFMEGVLEI…LHVEAVNGDD (75 aa). Residues 168-173, 180-185, and arginine 211 each bind ATP; these read GFGQRG and KAGKTM.

The protein belongs to the Rho family. Homohexamer. The homohexamer assembles into an open ring structure.

Functionally, facilitates transcription termination by a mechanism that involves Rho binding to the nascent RNA, activation of Rho's RNA-dependent ATPase activity, and release of the mRNA from the DNA template. The protein is Transcription termination factor Rho of Bacillus subtilis (strain 168).